Consider the following 205-residue polypeptide: Methyltransferase-like 26 B (205 aa).

The protein belongs to the UPF0585 family.

This Danio rerio (Zebrafish) protein is Methyltransferase-like 26 B.